The following is a 112-amino-acid chain: B3 domain-containing protein At1g43171 (112 aa).

Positions 19–112 form a DNA-binding region, TF-B3; sequence DIVGNVALPK…FENKFIVLNF (94 aa).

The protein resides in the nucleus. This chain is B3 domain-containing protein At1g43171, found in Arabidopsis thaliana (Mouse-ear cress).